A 254-amino-acid polypeptide reads, in one-letter code: Triosephosphate isomerase (254 aa).

9–11 (NWK) is a binding site for substrate. His-95 (electrophile) is an active-site residue. The Proton acceptor role is filled by Glu-167. Substrate contacts are provided by residues Gly-173, Ser-213, and 234–235 (GG).

Belongs to the triosephosphate isomerase family. As to quaternary structure, homodimer.

It is found in the cytoplasm. The enzyme catalyses D-glyceraldehyde 3-phosphate = dihydroxyacetone phosphate. It functions in the pathway carbohydrate biosynthesis; gluconeogenesis. The protein operates within carbohydrate degradation; glycolysis; D-glyceraldehyde 3-phosphate from glycerone phosphate: step 1/1. Functionally, involved in the gluconeogenesis. Catalyzes stereospecifically the conversion of dihydroxyacetone phosphate (DHAP) to D-glyceraldehyde-3-phosphate (G3P). In Roseiflexus sp. (strain RS-1), this protein is Triosephosphate isomerase.